The sequence spans 457 residues: Flavin-containing monooxygenase FMO GS-OX2 (457 aa).

17–22 (GAGAAG) is a binding site for FAD. 211–216 (GNFASG) is an NADP(+) binding site.

Belongs to the FMO family.

The enzyme catalyses a (Z)-omega-(methylsulfanyl)-N-sulfo-alkylhydroximate S-glucoside + NADPH + O2 + H(+) = a (Z)-omega-(methylsulfinyl)-alkyl-glucosinolate + NADP(+) + H2O. In terms of biological role, catalyzes the conversion of methylthioalkyl glucosinolates of any chain length into methylsulfinylalkyl glucosinolates. The protein is Flavin-containing monooxygenase FMO GS-OX2 (FMOGS-OX2) of Arabidopsis thaliana (Mouse-ear cress).